The sequence spans 373 residues: 4-hydroxy-3-methylbut-2-en-1-yl diphosphate synthase (flavodoxin) (373 aa).

Positions 270, 273, 305, and 312 each coordinate [4Fe-4S] cluster.

It belongs to the IspG family. [4Fe-4S] cluster serves as cofactor.

The catalysed reaction is (2E)-4-hydroxy-3-methylbut-2-enyl diphosphate + oxidized [flavodoxin] + H2O + 2 H(+) = 2-C-methyl-D-erythritol 2,4-cyclic diphosphate + reduced [flavodoxin]. It participates in isoprenoid biosynthesis; isopentenyl diphosphate biosynthesis via DXP pathway; isopentenyl diphosphate from 1-deoxy-D-xylulose 5-phosphate: step 5/6. Functionally, converts 2C-methyl-D-erythritol 2,4-cyclodiphosphate (ME-2,4cPP) into 1-hydroxy-2-methyl-2-(E)-butenyl 4-diphosphate. This Photobacterium profundum (strain SS9) protein is 4-hydroxy-3-methylbut-2-en-1-yl diphosphate synthase (flavodoxin).